A 158-amino-acid polypeptide reads, in one-letter code: Endoribonuclease YbeY (158 aa).

Zn(2+) contacts are provided by His114, His118, and His124.

This sequence belongs to the endoribonuclease YbeY family. Zn(2+) serves as cofactor.

Its subcellular location is the cytoplasm. Its function is as follows. Single strand-specific metallo-endoribonuclease involved in late-stage 70S ribosome quality control and in maturation of the 3' terminus of the 16S rRNA. The protein is Endoribonuclease YbeY of Legionella pneumophila (strain Paris).